The sequence spans 338 residues: Aspartate-semialdehyde dehydrogenase (338 aa).

Residues 13-16 (TGNV) and 41-42 (SS) each bind NADP(+). Residue Arg101 participates in phosphate binding. Cys132 serves as the catalytic Acyl-thioester intermediate. Residue Gln159 coordinates substrate. NADP(+) contacts are provided by residues 162–163 (SG) and Pro187. A phosphate-binding site is contributed by Lys216. Residue Arg237 participates in substrate binding. His244 functions as the Proton acceptor in the catalytic mechanism. NADP(+) is bound at residue Asn317.

The protein belongs to the aspartate-semialdehyde dehydrogenase family. In terms of assembly, homodimer.

The enzyme catalyses L-aspartate 4-semialdehyde + phosphate + NADP(+) = 4-phospho-L-aspartate + NADPH + H(+). The protein operates within amino-acid biosynthesis; L-lysine biosynthesis via DAP pathway; (S)-tetrahydrodipicolinate from L-aspartate: step 2/4. It participates in amino-acid biosynthesis; L-methionine biosynthesis via de novo pathway; L-homoserine from L-aspartate: step 2/3. It functions in the pathway amino-acid biosynthesis; L-threonine biosynthesis; L-threonine from L-aspartate: step 2/5. In terms of biological role, catalyzes the NADPH-dependent formation of L-aspartate-semialdehyde (L-ASA) by the reductive dephosphorylation of L-aspartyl-4-phosphate. In Rickettsia conorii (strain ATCC VR-613 / Malish 7), this protein is Aspartate-semialdehyde dehydrogenase.